A 132-amino-acid chain; its full sequence is Rubredoxin-1 (132 aa).

The region spanning 1–53 is the Rubredoxin-like domain; the sequence is MSRYQCPDCQYIYDENKGEPHEGFHPNTSWNDIPKDWACPDCAVRDKVDFIFL. Fe cation-binding residues include cysteine 6, cysteine 9, cysteine 39, and cysteine 42. The interval 108-132 is disordered; it reads TEVLDQASTPQVVRKSSTRKKMRNK. Positions 113–122 are enriched in polar residues; the sequence is QASTPQVVRK. Residues 123–132 show a composition bias toward basic residues; the sequence is SSTRKKMRNK.

The protein belongs to the rubredoxin family. It depends on Fe(3+) as a cofactor.

The protein localises to the cytoplasm. The protein operates within hydrocarbon metabolism; alkane degradation. Not known. Probably involved in an electron transport pathway, but not required for the hydrocarbon hydroxylating system. Seems to be non-functional. The sequence is that of Rubredoxin-1 (alkF) from Ectopseudomonas oleovorans (Pseudomonas oleovorans).